The sequence spans 875 residues: Neurotrypsin (875 aa).

An N-terminal signal peptide occupies residues 1-20 (MTLARFVLALVLGALPEVVG). An N-linked (GlcNAc...) asparagine glycan is attached at Asn26. The interval 29–68 (LHHRHRHSPPPGPQYPYYLPTHQRPPRTRPPPPLPRFSRP) is disordered. The region spanning 93–165 (CPPGEPWVSV…GKVDWGYCDC (73 aa)) is the Kringle domain. 20 disulfides stabilise this stretch: Cys93–Cys165, Cys109–Cys149, Cys138–Cys163, Cys195–Cys259, Cys208–Cys269, Cys239–Cys249, Cys305–Cys369, Cys318–Cys379, Cys349–Cys359, Cys412–Cys475, Cys425–Cys485, Cys455–Cys465, Cys525–Cys589, Cys538–Cys599, Cys569–Cys579, Cys619–Cys750, Cys661–Cys677, Cys765–Cys831, Cys794–Cys808, and Cys821–Cys850. 4 consecutive SRCR domains span residues 170–271 (VRLR…TCSF), 280–381 (IRLV…SCTP), 387–487 (IRLA…ACYP), and 500–601 (VRLM…ICDY). Positions 619-630 (CGLRLLHRRQKR) are zymogen activation region. One can recognise a Peptidase S1 domain in the interval 631–874 (IIGGKNSLRG…FVPWIKSVTK (244 aa)). The active-site Charge relay system is the His676. An N-linked (GlcNAc...) asparagine glycan is attached at Asn683. Asp726 (charge relay system) is an active-site residue. Ser825 functions as the Charge relay system in the catalytic mechanism.

Belongs to the peptidase S1 family.

It is found in the secreted. Its function is as follows. Plays a role in neuronal plasticity and the proteolytic action may subserve structural reorganizations associated with learning and memory operations. In Trachypithecus phayrei (Phayre's leaf monkey), this protein is Neurotrypsin (PRSS12).